The following is a 436-amino-acid chain: MSDRQQVKNARGERIAIVAGLRTPFAKQATAFHGVSALDMGKMVVNELISRSELDPKLIEQLVYGQVVLMPAAPNIAREIVLGTGMNVSTDAYSVTRACATSFQSAVNVAESIMTGNVEIGIAGGADSSSVLPITVSKKLAHALVDLNKARTLGQKFAIMRRLGLKDLMPVPPAVAEYSTGLSMGQTAEQMAKTYGISRADQDALAHRSHTLATETWNSGNLRDEVMTAHVAPYKQFIDRDNNIRENSVLESYAKLRPAFDRKHGSVTAANSTPLTDGASAIILMSEGRAKALGYQPIGYIKSYAFTAIDVWQDMLMGPSYATPLALKRAGMELEDLTLIEMHEAFAAQTLANMQMFGSKKFAAEKLGRNRAIGDIDMSKFNVLGGSLAYGHPFAATGTRLITQVCRELKRRGGGTGLATACAAGGLGAAMIVEVE.

Cysteine 99 serves as the catalytic Acyl-thioester intermediate. Active-site proton acceptor residues include histidine 392 and cysteine 422.

Belongs to the thiolase-like superfamily. Thiolase family. As to quaternary structure, heterotetramer of two alpha chains (FadJ) and two beta chains (FadI).

The protein localises to the cytoplasm. It carries out the reaction an acyl-CoA + acetyl-CoA = a 3-oxoacyl-CoA + CoA. It functions in the pathway lipid metabolism; fatty acid beta-oxidation. Its function is as follows. Catalyzes the final step of fatty acid oxidation in which acetyl-CoA is released and the CoA ester of a fatty acid two carbons shorter is formed. The protein is 3-ketoacyl-CoA thiolase of Shewanella denitrificans (strain OS217 / ATCC BAA-1090 / DSM 15013).